The sequence spans 394 residues: Thioredoxin-interacting protein (394 aa).

K212 participates in a covalent cross-link: Glycyl lysine isopeptide (Lys-Gly) (interchain with G-Cter in ubiquitin). S361 is modified (phosphoserine).

This sequence belongs to the arrestin family. As to quaternary structure, homodimer; disulfide-linked. Interacts with TXN/thioredoxin through its redox-active site. Interacts with transcriptional repressors ZBTB16, ZBTB32 and HDAC1. Interacts with DDIT4. Ubiquitinated; undergoes heterotypic 'Lys-48'-/'Lys-63'-branched polyubiquitination catalyzed by ITCH and UBR5 resulting in proteasomal degradation. Deubiquitinated by USP5, leading to TXNIP stabilization.

The protein localises to the cytoplasm. May act as an oxidative stress mediator by inhibiting thioredoxin activity or by limiting its bioavailability. Interacts with COPS5 and restores COPS5-induced suppression of CDKN1B stability, blocking the COPS5-mediated translocation of CDKN1B from the nucleus to the cytoplasm. Functions as a transcriptional repressor, possibly by acting as a bridge molecule between transcription factors and corepressor complexes, and over-expression will induce G0/G1 cell cycle arrest. Required for the maturation of natural killer cells. Acts as a suppressor of tumor cell growth. Inhibits the proteasomal degradation of DDIT4, and thereby contributes to the inhibition of the mammalian target of rapamycin complex 1 (mTORC1). The chain is Thioredoxin-interacting protein (Txnip) from Rattus norvegicus (Rat).